The following is a 142-amino-acid chain: Required for drug-induced death protein 1 (142 aa).

2 disordered regions span residues 1–32 and 46–66; these read MTVG…DEEA and EAAA…TRGA. The chain crosses the membrane as a helical span at residues 116–138; it reads VVIGLQGFAAAYSAPFAVATSVV.

Its subcellular location is the membrane. Its function is as follows. Regulates drug efflux through modulation of ABCB1 localization and activity. The chain is Required for drug-induced death protein 1 from Homo sapiens (Human).